We begin with the raw amino-acid sequence, 364 residues long: MRYLFAGGGTGGHIYPAVAIAKEILKNEQDAQILFVGTEKGLEKELVPREGFELVTIEVQGFKRKLSFDTLKTVYKAFTGFKQANKILKDFKPHVVIGTGGYVCGPVLMAAVIKRIPTLIHEQNAFPGLTNRLLSPFVDIVAVSFEDSVKYFKKAKKVVVTGNPIREELLRVKKEEGREKLGFSMSKPLVVSVGGSRGAEKINSTMVELLKIKDRKFQVLIITGSSNYDKVLEKVKKENVVLDDSVKIVPYSHEMQYVYAAADIMICRAGAITLSEITAVGVPSILIPSPYVANNHQEYNARLLERQGAFHVILEKDLDAKKLYEKIEYLLSEPSLLNEMREKAKSMSRTDASYKIYQLVKTIT.

UDP-N-acetyl-alpha-D-glucosamine contacts are provided by residues 10 to 12 (TGG), Asn-124, Arg-166, Ser-196, and Gln-297.

It belongs to the glycosyltransferase 28 family. MurG subfamily.

The protein resides in the cell membrane. The catalysed reaction is di-trans,octa-cis-undecaprenyl diphospho-N-acetyl-alpha-D-muramoyl-L-alanyl-D-glutamyl-meso-2,6-diaminopimeloyl-D-alanyl-D-alanine + UDP-N-acetyl-alpha-D-glucosamine = di-trans,octa-cis-undecaprenyl diphospho-[N-acetyl-alpha-D-glucosaminyl-(1-&gt;4)]-N-acetyl-alpha-D-muramoyl-L-alanyl-D-glutamyl-meso-2,6-diaminopimeloyl-D-alanyl-D-alanine + UDP + H(+). Its pathway is cell wall biogenesis; peptidoglycan biosynthesis. In terms of biological role, cell wall formation. Catalyzes the transfer of a GlcNAc subunit on undecaprenyl-pyrophosphoryl-MurNAc-pentapeptide (lipid intermediate I) to form undecaprenyl-pyrophosphoryl-MurNAc-(pentapeptide)GlcNAc (lipid intermediate II). This is UDP-N-acetylglucosamine--N-acetylmuramyl-(pentapeptide) pyrophosphoryl-undecaprenol N-acetylglucosamine transferase from Caldanaerobacter subterraneus subsp. tengcongensis (strain DSM 15242 / JCM 11007 / NBRC 100824 / MB4) (Thermoanaerobacter tengcongensis).